Reading from the N-terminus, the 205-residue chain is Dephospho-CoA kinase (205 aa).

Positions 13 to 205 constitute a DPCK domain; that stretch reads RIGLTGGIAS…KWINTIREIL (193 aa). 21-26 provides a ligand contact to ATP; the sequence is ASGKST.

Belongs to the CoaE family.

It is found in the cytoplasm. The enzyme catalyses 3'-dephospho-CoA + ATP = ADP + CoA + H(+). It participates in cofactor biosynthesis; coenzyme A biosynthesis; CoA from (R)-pantothenate: step 5/5. Catalyzes the phosphorylation of the 3'-hydroxyl group of dephosphocoenzyme A to form coenzyme A. This chain is Dephospho-CoA kinase, found in Prochlorococcus marinus (strain MIT 9312).